We begin with the raw amino-acid sequence, 520 residues long: MVSVPTGLRPSAVPGVRLPALADQVGAVMAGPDRRAAVPDVTVTGVTLRAQDVLPGDLFAALPGATTHGARHAAEAIERGAVAVLTDAAGVAQLTGGRTTPTLLHPRPRSVLGQLAAAVYAHPSERLTVIGITGTSGKTTTTYLVESGLRAAGRTAGLIGTVGIRIDGADIPSALTTPEAPALQALLAAMAEQRVDTVVMEVSSHALALGRVDGTRFAVGGFTNLSRDHLDFHPTMADYFEAKALLFDPNSPLRAHRAVVCIDDEAGREMAARAGDAVTVSAEGQPAHWRAVEVAPLGTGGQQFTVIDPAGVQHRAGIRLPGHYNVANCLVALALLDAVGVSPEQAAPGLLQTRVPGRMEEIDAGQDFLALVDYAHKPGALRAVLSSLKRPDRRLAVVFGAGGERDPGKRAPMGATAAELADLVVVTDDNPRGEDPAAIRREILAGVTESGCAAEVVEIGDRRAAIRHAVAWAGPGDVVLVAGKGHETGQRTGEHTRPFDDRVELAEALREAVGPRKAQG.

Residue L48 participates in UDP-N-acetyl-alpha-D-muramoyl-L-alanyl-D-glutamate binding. 134–140 (GTSGKTT) lines the ATP pocket. UDP-N-acetyl-alpha-D-muramoyl-L-alanyl-D-glutamate is bound by residues 176–177 (TT), S203, and R211. N6-carboxylysine is present on K243. Meso-2,6-diaminopimelate contacts are provided by residues R405, 429–432 (DNPR), G483, and E487. Positions 429-432 (DNPR) match the Meso-diaminopimelate recognition motif motif.

This sequence belongs to the MurCDEF family. MurE subfamily. The cofactor is Mg(2+). In terms of processing, carboxylation is probably crucial for Mg(2+) binding and, consequently, for the gamma-phosphate positioning of ATP.

The protein resides in the cytoplasm. It carries out the reaction UDP-N-acetyl-alpha-D-muramoyl-L-alanyl-D-glutamate + meso-2,6-diaminopimelate + ATP = UDP-N-acetyl-alpha-D-muramoyl-L-alanyl-gamma-D-glutamyl-meso-2,6-diaminopimelate + ADP + phosphate + H(+). It participates in cell wall biogenesis; peptidoglycan biosynthesis. In terms of biological role, catalyzes the addition of meso-diaminopimelic acid to the nucleotide precursor UDP-N-acetylmuramoyl-L-alanyl-D-glutamate (UMAG) in the biosynthesis of bacterial cell-wall peptidoglycan. The polypeptide is UDP-N-acetylmuramoyl-L-alanyl-D-glutamate--2,6-diaminopimelate ligase (Mycolicibacterium paratuberculosis (strain ATCC BAA-968 / K-10) (Mycobacterium paratuberculosis)).